We begin with the raw amino-acid sequence, 255 residues long: NAD kinase (255 aa).

D44 functions as the Proton acceptor in the catalytic mechanism. NAD(+)-binding positions include D44–G45, H49, N114–E115, D144, A152, S155–S160, and Q216.

The protein belongs to the NAD kinase family. The cofactor is a divalent metal cation.

The protein resides in the cytoplasm. The enzyme catalyses NAD(+) + ATP = ADP + NADP(+) + H(+). Its function is as follows. Involved in the regulation of the intracellular balance of NAD and NADP, and is a key enzyme in the biosynthesis of NADP. Catalyzes specifically the phosphorylation on 2'-hydroxyl of the adenosine moiety of NAD to yield NADP. The polypeptide is NAD kinase (Rickettsia rickettsii (strain Iowa)).